A 412-amino-acid polypeptide reads, in one-letter code: MLPQNKDQVLPQTSVLPGRPTWGFSQLVDSSPHNLQPLSPHQGLPPSQPPFSSTQSRRPSSPPPASPSPGFQFGSCDSNSDFAPHPYSPSLPSSPTFFHQNYLSLPRPRASSPSNHWLYPSPPLTPSFSPSQPQNSSLPHSPCQSPSHPEELHSSTLTSPGPSPPSHRLHSNRQTWRWHQYRDTGSGSPGVVERCVPSEKDPAQFRDPGALAQALVVQLGHRRIAHDLRLLLLQHLWLGRTGQAPVVEYPICLVCLRPRSPSCPLPRYRTGPRLLAFPQLLPCVQGQESGPLRIGIGFGLRLPQGQARALHLLPEKRPKEAGPQGKATQACGHQLPASQPPAAQARADPVPGTPSQTRSFRSAGLQSPNSPRCFSGPPPRAPKQVTTSLKPRPCPGPKRPVSLELILQKSSV.

Polar residues-rich tracts occupy residues 1–15 and 23–39; these read MLPQ…QTSV and GFSQ…QPLS. Disordered stretches follow at residues 1 to 88, 123 to 174, and 317 to 412; these read MLPQ…HPYS, PLTP…SNRQ, and RPKE…KSSV. Low complexity-rich tracts occupy residues 50–59, 126–142, and 334–350; these read PFSSTQSRRP, PSFS…PHSP, and QLPA…ADPV. A compositionally biased stretch (polar residues) spans 353–372; the sequence is TPSQTRSFRSAGLQSPNSPR.

This chain is Proline-rich protein 30 (PRR30), found in Homo sapiens (Human).